The following is a 309-amino-acid chain: IGEVGSLVRAANCPRPQRNLPYAARTAPAPAQPPSPAPTPSRTPPVSATPRHRRRPERSKTPDKRSAETTQARTVERTGSAPKHRPEARCRQQIPWDDTHRQCAGSVGHNTLTALNTPSRTHHAAPHRRCFGCVGARPGGCVPGVSRACVGCVGGVLAGCVRVCRGRVPGVSCRVCRGRVAGVPAGCGGGVCRRCARPRGVRLRRNECVASRPLFPPRSPGPSSLAPGRCFSCVPRDPCCRPPGTSSFPRGITQTQTRVFFSPCAPHVAFIRRRRPPHHTQLVAVHTRNSKFHPPAKNTPPPLEDPPRG.

Disordered stretches follow at residues 1–94 (IGEV…RQQI) and 286–309 (HTRN…PPRG). Positions 30–43 (PAQPPSPAPTPSRT) are enriched in pro residues. Residues 58 to 67 (RSKTPDKRSA) are compositionally biased toward basic and acidic residues. The segment covering 297–309 (KNTPPPLEDPPRG) has biased composition (pro residues).

This is an uncharacterized protein from Homo sapiens (Human).